Reading from the N-terminus, the 307-residue chain is tRNA pseudouridine synthase B (307 aa).

The active-site Nucleophile is aspartate 47.

It belongs to the pseudouridine synthase TruB family. Type 1 subfamily.

The catalysed reaction is uridine(55) in tRNA = pseudouridine(55) in tRNA. Functionally, responsible for synthesis of pseudouridine from uracil-55 in the psi GC loop of transfer RNAs. In Chromohalobacter salexigens (strain ATCC BAA-138 / DSM 3043 / CIP 106854 / NCIMB 13768 / 1H11), this protein is tRNA pseudouridine synthase B.